Here is a 729-residue protein sequence, read N- to C-terminus: Fatty acid oxidation complex subunit alpha (729 aa).

The interval 1 to 189 (MLYQSETLQL…KIGLVDAVVD (189 aa)) is enoyl-CoA hydratase/isomerase. Aspartate 296 is a binding site for substrate. The interval 311–729 (AAPKLAAVLG…LLDVSTNQPA (419 aa)) is 3-hydroxyacyl-CoA dehydrogenase. NAD(+) is bound by residues methionine 324, aspartate 343, 400 to 402 (VVE), lysine 407, and serine 429. Residue histidine 450 is the For 3-hydroxyacyl-CoA dehydrogenase activity of the active site. NAD(+) is bound at residue asparagine 453. The substrate site is built by asparagine 500 and tyrosine 660.

The protein in the N-terminal section; belongs to the enoyl-CoA hydratase/isomerase family. This sequence in the C-terminal section; belongs to the 3-hydroxyacyl-CoA dehydrogenase family. Heterotetramer of two alpha chains (FadB) and two beta chains (FadA).

It catalyses the reaction a (3S)-3-hydroxyacyl-CoA + NAD(+) = a 3-oxoacyl-CoA + NADH + H(+). The catalysed reaction is a (3S)-3-hydroxyacyl-CoA = a (2E)-enoyl-CoA + H2O. It carries out the reaction a 4-saturated-(3S)-3-hydroxyacyl-CoA = a (3E)-enoyl-CoA + H2O. The enzyme catalyses (3S)-3-hydroxybutanoyl-CoA = (3R)-3-hydroxybutanoyl-CoA. It catalyses the reaction a (3Z)-enoyl-CoA = a 4-saturated (2E)-enoyl-CoA. The catalysed reaction is a (3E)-enoyl-CoA = a 4-saturated (2E)-enoyl-CoA. Its pathway is lipid metabolism; fatty acid beta-oxidation. Functionally, involved in the aerobic and anaerobic degradation of long-chain fatty acids via beta-oxidation cycle. Catalyzes the formation of 3-oxoacyl-CoA from enoyl-CoA via L-3-hydroxyacyl-CoA. It can also use D-3-hydroxyacyl-CoA and cis-3-enoyl-CoA as substrate. The chain is Fatty acid oxidation complex subunit alpha from Yersinia pseudotuberculosis serotype IB (strain PB1/+).